A 949-amino-acid chain; its full sequence is MAM domain-containing glycosylphosphatidylinositol anchor protein 1 (949 aa).

A signal peptide spans 1 to 18 (MEMICVLFLSLVPAYSRG). Ig-like domains are found at residues 24–125 (PAQA…IRVD) and 132–230 (PVLT…KSIT). Residues N42 and N90 are each glycosylated (N-linked (GlcNAc...) asparagine). Disulfide bonds link C60–C108 and C157–C214. N-linked (GlcNAc...) asparagine glycans are attached at residues N235, N247, N257, N292, N307, and N331. Residues 240–323 (PALKLSVNET…VGNPAKKTVN (84 aa)) enclose the Ig-like 3 domain. An intrachain disulfide couples C262 to C308. Ig-like domains are found at residues 338 to 432 (PDVI…VEVN), 440 to 531 (PTIS…ALVQ), and 537 to 625 (PPVV…FQVS). A disulfide bridge links C357 with C415. The N-linked (GlcNAc...) asparagine glycan is linked to N432. Intrachain disulfides connect C463–C513 and C559–C609. N577, N649, and N820 each carry an N-linked (GlcNAc...) asparagine glycan. A Fibronectin type-III domain is found at 637–737 (TPNPTLSQKQ…ARIIRYMEPI (101 aa)). Residues 745–912 (NTCRFEDEKI…VTLKKGDCPR (168 aa)) enclose the MAM domain. S926 is lipidated: GPI-anchor amidated serine. The propeptide at 927–949 (GVSAQHGPCLCGPLTFFLYVLLR) is removed in mature form.

In terms of assembly, interacts heterophilically through its MAM domain with proteins in axon-rich regions and through its Ig-like domains with proteins in differentiating muscle. In the embryonic brachial spinal cord, selectively expressed by medial lateral motor column neurons, some populations of dorsal root ganglion neurons, and interneurons.

It localises to the cell membrane. In terms of biological role, required for radial migration of cortical neurons in the superficial layer of the neocortex. The protein is MAM domain-containing glycosylphosphatidylinositol anchor protein 1 of Gallus gallus (Chicken).